A 211-amino-acid polypeptide reads, in one-letter code: ATP phosphoribosyltransferase (211 aa).

The protein belongs to the ATP phosphoribosyltransferase family. Short subfamily. As to quaternary structure, heteromultimer composed of HisG and HisZ subunits.

Its subcellular location is the cytoplasm. The catalysed reaction is 1-(5-phospho-beta-D-ribosyl)-ATP + diphosphate = 5-phospho-alpha-D-ribose 1-diphosphate + ATP. Its pathway is amino-acid biosynthesis; L-histidine biosynthesis; L-histidine from 5-phospho-alpha-D-ribose 1-diphosphate: step 1/9. Its function is as follows. Catalyzes the condensation of ATP and 5-phosphoribose 1-diphosphate to form N'-(5'-phosphoribosyl)-ATP (PR-ATP). Has a crucial role in the pathway because the rate of histidine biosynthesis seems to be controlled primarily by regulation of HisG enzymatic activity. This Pseudomonas savastanoi pv. phaseolicola (strain 1448A / Race 6) (Pseudomonas syringae pv. phaseolicola (strain 1448A / Race 6)) protein is ATP phosphoribosyltransferase.